Consider the following 53-residue polypeptide: Natriuretic peptide DNP-2 (53 aa).

A disulfide bridge links Cys7 with Cys23. Residues 39–53 (IIRDLHPDSKQSQAA) constitute a propeptide that is removed on maturation.

Belongs to the natriuretic peptide family. In terms of tissue distribution, expressed by the venom gland.

The protein resides in the secreted. Its function is as follows. Exhibits vasodilator, natriuretic and diuretic properties in animal models and human tissues. Acts by stimulating cGMP via the natriuretic peptide receptor 1 (NPR1). Is a poor agonist of the atrial natriuretic peptide receptor 2 (NPR2). Is not degraded by neutral endopeptidase (NEP/MME). Binds to atrial natriuretic peptide clearance receptor (NPR-C/NPR3), which may be responsible of the removal of DNP from the circulation. Increases calcium uptake and induces histamine release from rat peritoneal mast cells. Increases calcium-activated potassium (KCa) current in gastric antral circular smooth muscle cells by increasing cGMP production and activating inositol trisphosphate receptors (IP3Rs). In vivo, reduces both systolic and diastolic blood pressure with no effect on heart rate, when intravenously injected in conscious rabbits. The polypeptide is Natriuretic peptide DNP-2 (Dendroaspis angusticeps (Eastern green mamba)).